A 450-amino-acid chain; its full sequence is MRRHAIILAAGKGTRMKSKKYKVLHEVAGKPMVEHVLESVKGSGVDQVVTIVGHGAESVKGHLGERSLYSFQEEQLGTAHAVQMAKSHLEDKEGTTIVVCGDTPLITKETLETLIAHHEDANAQATVLSASIQQPYGYGRIVRNASGRLERIVEEKDATQAEKDINEISSGIFAFNNKTLFEKLTQVKNDNAQGEYYLPDVLSLILNDGGIVEVYRTNDVEEIMGVNDRVMLSQAENAMQRRTNHYHMLNGVTIIDPDSTYIGPDVTIGSDTVIEPGVRINGRTEIGEDVVIGQYSEINNSTIENGACIQQSVVNDASVGANTKVGPFAQLRPGAQLGADVKVGNFVEIKKADLKDGAKVSHLSYIGDAVIGERTNIGCGTITVNYDGENKFKTIVGKDSFVGCNVNLVAPVTIGDDVLVAAGSTITDDVPNDSLAVARARQTTKEGYRK.

Residues 1–229 form a pyrophosphorylase region; that stretch reads MRRHAIILAA…VEEIMGVNDR (229 aa). Residues 8-11, Lys-22, Gln-72, and 77-78 each bind UDP-N-acetyl-alpha-D-glucosamine; these read LAAG and GT. Position 102 (Asp-102) interacts with Mg(2+). UDP-N-acetyl-alpha-D-glucosamine contacts are provided by Gly-139, Glu-154, and Asn-227. Asn-227 is a binding site for Mg(2+). Positions 230–250 are linker; sequence VMLSQAENAMQRRTNHYHMLN. Residues 251-450 are N-acetyltransferase; it reads GVTIIDPDST…RQTTKEGYRK (200 aa). Arg-332 and Lys-350 together coordinate UDP-N-acetyl-alpha-D-glucosamine. His-362 acts as the Proton acceptor in catalysis. UDP-N-acetyl-alpha-D-glucosamine-binding residues include Tyr-365 and Asn-376. Residues 385–386, Ala-422, and Arg-439 each bind acetyl-CoA; that span reads NY.

In the N-terminal section; belongs to the N-acetylglucosamine-1-phosphate uridyltransferase family. It in the C-terminal section; belongs to the transferase hexapeptide repeat family. Homotrimer. It depends on Mg(2+) as a cofactor.

The protein localises to the cytoplasm. It catalyses the reaction alpha-D-glucosamine 1-phosphate + acetyl-CoA = N-acetyl-alpha-D-glucosamine 1-phosphate + CoA + H(+). The catalysed reaction is N-acetyl-alpha-D-glucosamine 1-phosphate + UTP + H(+) = UDP-N-acetyl-alpha-D-glucosamine + diphosphate. Its pathway is nucleotide-sugar biosynthesis; UDP-N-acetyl-alpha-D-glucosamine biosynthesis; N-acetyl-alpha-D-glucosamine 1-phosphate from alpha-D-glucosamine 6-phosphate (route II): step 2/2. It participates in nucleotide-sugar biosynthesis; UDP-N-acetyl-alpha-D-glucosamine biosynthesis; UDP-N-acetyl-alpha-D-glucosamine from N-acetyl-alpha-D-glucosamine 1-phosphate: step 1/1. The protein operates within bacterial outer membrane biogenesis; LPS lipid A biosynthesis. Catalyzes the last two sequential reactions in the de novo biosynthetic pathway for UDP-N-acetylglucosamine (UDP-GlcNAc). The C-terminal domain catalyzes the transfer of acetyl group from acetyl coenzyme A to glucosamine-1-phosphate (GlcN-1-P) to produce N-acetylglucosamine-1-phosphate (GlcNAc-1-P), which is converted into UDP-GlcNAc by the transfer of uridine 5-monophosphate (from uridine 5-triphosphate), a reaction catalyzed by the N-terminal domain. The protein is Bifunctional protein GlmU of Staphylococcus aureus (strain MRSA252).